Here is a 434-residue protein sequence, read N- to C-terminus: D-amino acid dehydrogenase (434 aa).

Position 3–17 (3–17) interacts with FAD; sequence VVILGSGVVGVASAW.

The protein belongs to the DadA oxidoreductase family. The cofactor is FAD.

The catalysed reaction is a D-alpha-amino acid + A + H2O = a 2-oxocarboxylate + AH2 + NH4(+). It functions in the pathway amino-acid degradation; D-alanine degradation; NH(3) and pyruvate from D-alanine: step 1/1. In terms of biological role, oxidative deamination of D-amino acids. The polypeptide is D-amino acid dehydrogenase (Serratia proteamaculans (strain 568)).